The sequence spans 269 residues: Surfeit locus protein 4 (269 aa).

The next 5 membrane-spanning stretches (helical) occupy residues 64–84 (FLAT…CVLV), 92–112 (YACF…SILW), 179–199 (FFSI…AVGF), 203–223 (LAAL…NAFW), and 242–262 (TTSV…GVSM). Residues 266–269 (KKEW) carry the Di-lysine motif motif.

Belongs to the SURF4 family.

The protein localises to the endoplasmic reticulum membrane. It is found in the endoplasmic reticulum-Golgi intermediate compartment membrane. It localises to the golgi apparatus membrane. In terms of biological role, endoplasmic reticulum cargo receptor that mediates the export of lipoproteins by recruiting cargos into COPII vesicles to facilitate their secretion. The chain is Surfeit locus protein 4 from Danio rerio (Zebrafish).